The sequence spans 414 residues: 3-ketoacyl-CoA thiolase, peroxisomal (414 aa).

A peroxisome-targeting transit peptide spans 1–9; it reads MDRLNNLAT. The tract at residues 1-9 is PTS2-type peroxisomal targeting signal; that stretch reads MDRLNNLAT. The active-site Acyl-thioester intermediate is cysteine 115. Catalysis depends on proton acceptor residues histidine 370 and cysteine 400.

This sequence belongs to the thiolase-like superfamily. Thiolase family. In terms of assembly, homodimer. Interacts (via PTS2-type peroxisomal targeting signal region) with PEX7; leading to its translocation into peroxisomes.

The protein resides in the peroxisome. The catalysed reaction is an acyl-CoA + acetyl-CoA = a 3-oxoacyl-CoA + CoA. It participates in lipid metabolism; fatty acid metabolism. In terms of biological role, responsible for the thiolytic cleavage of straight chain 3-keto fatty acyl-CoAs (3-oxoacyl-CoAs). This is 3-ketoacyl-CoA thiolase, peroxisomal (POT1) from Yarrowia lipolytica (strain CLIB 122 / E 150) (Yeast).